Reading from the N-terminus, the 152-residue chain is D-aminoacyl-tRNA deacylase (152 aa).

Residues 137–138 (GP) carry the Gly-cisPro motif, important for rejection of L-amino acids motif.

Belongs to the DTD family. As to quaternary structure, homodimer.

The protein resides in the cytoplasm. The catalysed reaction is glycyl-tRNA(Ala) + H2O = tRNA(Ala) + glycine + H(+). The enzyme catalyses a D-aminoacyl-tRNA + H2O = a tRNA + a D-alpha-amino acid + H(+). In terms of biological role, an aminoacyl-tRNA editing enzyme that deacylates mischarged D-aminoacyl-tRNAs. Also deacylates mischarged glycyl-tRNA(Ala), protecting cells against glycine mischarging by AlaRS. Acts via tRNA-based rather than protein-based catalysis; rejects L-amino acids rather than detecting D-amino acids in the active site. By recycling D-aminoacyl-tRNA to D-amino acids and free tRNA molecules, this enzyme counteracts the toxicity associated with the formation of D-aminoacyl-tRNA entities in vivo and helps enforce protein L-homochirality. The sequence is that of D-aminoacyl-tRNA deacylase from Geobacter sulfurreducens (strain ATCC 51573 / DSM 12127 / PCA).